The sequence spans 326 residues: Archaeal actin homolog (326 aa).

Residues 10–14, serine 179, glutamine 231, 285–288, and glutamine 311 each bind ATP; these read YGDTK and GGSN.

It belongs to the thermophilic archaeal actin family.

Polymerizes into bundles of filaments, forming a helix with a filament width of 5.5 nm and an axial repeating unit of 5.5 nm. Polymerization of Ta0583 requires NTP and is optimal with ATP, but GTP, UTP, CTP, and even the deoxy form of NTP can also support the polymerization reaction. Nucleoside diphosphate or AMP-PNP does not support polymerization. This is Archaeal actin homolog from Thermoplasma acidophilum (strain ATCC 25905 / DSM 1728 / JCM 9062 / NBRC 15155 / AMRC-C165).